Reading from the N-terminus, the 581-residue chain is MKASRFFVSTLKDAPADAEVVSHQLMMRAGLIKKLGAGIYSYMPMGLRVLRKIEAIVREEMNRAGAVELTMPVVQPAELWQETGRFDKMGPELLRIQDRHGRDFVVQPTSEEVITDIARQELRSYKQLPKNFYQIQTKFRDERRPRFGLMRGREFIMKDAYSFDRDPAAAKASYLVMEQAYRRIFDRFGLTYRAVAADSGAIGGDLSEEFQVVAATGEDAIVYCPQSDYAANMEKAEALAPSGVRGAATRALNKTSTPDKSTCAEVAQWLGVPLQSTVKSLVMATDEAQAADGSVKSQVWLLLLRGDHDMNQVKVAKLPGLGQGLRFATLDEIEAHFGCQPGYLGPIGLQKPLKIVADRDVALMADWICGANEAHWHLTGVNWGRDLPEPDMVADLRNVVAGDRSPDGKGVLAIERGIEVGHVFYLGTKYSRAMNASFLDENGKPQPLEMGCYGIGITRLPAAAIEQNHDARGIIWPDAIAPFTAVICPIGMERSAAVQAAADKLYADFLAAGIDVLLDDRGERPGAMFADWELIGVPHRVVISERGLKEDQLEYQHRRDQSATKVAAADILAHVKGRMTV.

This sequence belongs to the class-II aminoacyl-tRNA synthetase family. ProS type 1 subfamily. In terms of assembly, homodimer.

Its subcellular location is the cytoplasm. The catalysed reaction is tRNA(Pro) + L-proline + ATP = L-prolyl-tRNA(Pro) + AMP + diphosphate. Functionally, catalyzes the attachment of proline to tRNA(Pro) in a two-step reaction: proline is first activated by ATP to form Pro-AMP and then transferred to the acceptor end of tRNA(Pro). As ProRS can inadvertently accommodate and process non-cognate amino acids such as alanine and cysteine, to avoid such errors it has two additional distinct editing activities against alanine. One activity is designated as 'pretransfer' editing and involves the tRNA(Pro)-independent hydrolysis of activated Ala-AMP. The other activity is designated 'posttransfer' editing and involves deacylation of mischarged Ala-tRNA(Pro). The misacylated Cys-tRNA(Pro) is not edited by ProRS. The sequence is that of Proline--tRNA ligase from Verminephrobacter eiseniae (strain EF01-2).